We begin with the raw amino-acid sequence, 338 residues long: MTQKKVAILGAGSWGTGLALVLADNNHQPVIWGNLDKIVNEINESHTNSHYLPDIILPTEVKATLSLDEAIDGAEIVVIAIPTNAMRIVCKQLNEALKEPTILVHVSKGIEPETNLRMSEVIEDEIDASKRKALVVLSGPSHAEEVALRHPTTLCASCKDLSAAEIVQDRFINNNLRIYTNDDVIGAEIGGALKNIIALGAGISDGLGYGDNAKAALMTRGMAEITRLGVAVGSNPQTFYGLTGIGDLIVTCTSVHSRNWRAGNMLGKGENLDEVLEKMGMVVEGVRTAKAVHGWAKKLDIDMPITESIYAILFENKDAREAVDLLMGREKKIEKESF.

3 residues coordinate NADPH: serine 13, tryptophan 14, and lysine 108. Lysine 108, glycine 139, and serine 141 together coordinate sn-glycerol 3-phosphate. Alanine 143 lines the NADPH pocket. Positions 194, 247, 257, 258, and 259 each coordinate sn-glycerol 3-phosphate. Lysine 194 (proton acceptor) is an active-site residue. Arginine 258 contributes to the NADPH binding site. The NADPH site is built by valine 282 and glutamate 284.

Belongs to the NAD-dependent glycerol-3-phosphate dehydrogenase family.

It is found in the cytoplasm. It catalyses the reaction sn-glycerol 3-phosphate + NAD(+) = dihydroxyacetone phosphate + NADH + H(+). The catalysed reaction is sn-glycerol 3-phosphate + NADP(+) = dihydroxyacetone phosphate + NADPH + H(+). The protein operates within membrane lipid metabolism; glycerophospholipid metabolism. Functionally, catalyzes the reduction of the glycolytic intermediate dihydroxyacetone phosphate (DHAP) to sn-glycerol 3-phosphate (G3P), the key precursor for phospholipid synthesis. This chain is Glycerol-3-phosphate dehydrogenase [NAD(P)+], found in Listeria monocytogenes serotype 4b (strain CLIP80459).